Consider the following 412-residue polypeptide: Serine hydroxymethyltransferase (412 aa).

Residues Leu120 and 124–126 each bind (6S)-5,6,7,8-tetrahydrofolate; that span reads GHL. The residue at position 229 (Lys229) is an N6-(pyridoxal phosphate)lysine. 352–354 is a binding site for (6S)-5,6,7,8-tetrahydrofolate; the sequence is SPF.

It belongs to the SHMT family. In terms of assembly, homodimer. Pyridoxal 5'-phosphate serves as cofactor.

The protein resides in the cytoplasm. The catalysed reaction is (6R)-5,10-methylene-5,6,7,8-tetrahydrofolate + glycine + H2O = (6S)-5,6,7,8-tetrahydrofolate + L-serine. Its pathway is one-carbon metabolism; tetrahydrofolate interconversion. It participates in amino-acid biosynthesis; glycine biosynthesis; glycine from L-serine: step 1/1. Catalyzes the reversible interconversion of serine and glycine with tetrahydrofolate (THF) serving as the one-carbon carrier. This reaction serves as the major source of one-carbon groups required for the biosynthesis of purines, thymidylate, methionine, and other important biomolecules. Also exhibits THF-independent aldolase activity toward beta-hydroxyamino acids, producing glycine and aldehydes, via a retro-aldol mechanism. The chain is Serine hydroxymethyltransferase from Acetivibrio thermocellus (strain ATCC 27405 / DSM 1237 / JCM 9322 / NBRC 103400 / NCIMB 10682 / NRRL B-4536 / VPI 7372) (Clostridium thermocellum).